The primary structure comprises 375 residues: Hemolysin BL-binding component (375 aa).

The first 31 residues, 1-31 (MIKKIPYKLLAVSTLLTITTANVVSPVATFA), serve as a signal peptide directing secretion. A helical transmembrane segment spans residues 232-252 (FNVMKGAILGLPIIGGIIVGV).

As to quaternary structure, composed of a binding component, B, and two lytic components, L1 and L2. All three subunits act synergically to cause hemolysis.

The protein resides in the secreted. It localises to the host cell membrane. Its function is as follows. Cytotoxic protein, part of the enterotoxin complex. Responsible for binding to erythrocytes. This enterotoxin is thought to be the cause of the diarrheal form of gastroenteritis caused by food-borne strains of B.cereus. The protein is Hemolysin BL-binding component (hblA) of Bacillus cereus.